A 246-amino-acid polypeptide reads, in one-letter code: Carboxymethylenebutenolidase homolog (246 aa).

Catalysis depends on residues C132, D179, and H212.

Belongs to the dienelactone hydrolase family.

The protein localises to the cytoplasm. Its subcellular location is the cytosol. Functionally, cysteine hydrolase. In Xenopus tropicalis (Western clawed frog), this protein is Carboxymethylenebutenolidase homolog (cmbl).